A 319-amino-acid chain; its full sequence is Protein-methionine-sulfoxide reductase catalytic subunit MsrP (319 aa).

A signal peptide (tat-type signal) is located at residues 1 to 54 (MSSFKPSRFSTARLTGDAVTPKSIYLRRREFMIGLGAIAATGAASSAFADPLEA). Mo-molybdopterin-binding positions include Asn-75, 78-79 (YE), Cys-133, Asn-218, Arg-223, and 234-236 (GIK).

The protein belongs to the MsrP family. As to quaternary structure, heterodimer of a catalytic subunit (MsrP) and a heme-binding subunit (MsrQ). It depends on Mo-molybdopterin as a cofactor. In terms of processing, predicted to be exported by the Tat system. The position of the signal peptide cleavage has not been experimentally proven.

The protein localises to the periplasm. It catalyses the reaction L-methionyl-[protein] + a quinone + H2O = L-methionyl-(S)-S-oxide-[protein] + a quinol. The catalysed reaction is L-methionyl-[protein] + a quinone + H2O = L-methionyl-(R)-S-oxide-[protein] + a quinol. Its function is as follows. Part of the MsrPQ system that repairs oxidized periplasmic proteins containing methionine sulfoxide residues (Met-O), using respiratory chain electrons. Thus protects these proteins from oxidative-stress damage caused by reactive species of oxygen and chlorine generated by the host defense mechanisms. MsrPQ is essential for the maintenance of envelope integrity under bleach stress, rescuing a wide series of structurally unrelated periplasmic proteins from methionine oxidation. The catalytic subunit MsrP is non-stereospecific, being able to reduce both (R-) and (S-) diastereoisomers of methionine sulfoxide. This is Protein-methionine-sulfoxide reductase catalytic subunit MsrP from Brucella melitensis biotype 1 (strain ATCC 23456 / CCUG 17765 / NCTC 10094 / 16M).